Consider the following 219-residue polypeptide: Large ribosomal subunit protein bL25 (219 aa).

The segment at 176-219 (VTVVPPTDEPSEEEVEAMEGESATEEPEVVDEDKEDDEEENKED) is disordered. Positions 184–219 (EPSEEEVEAMEGESATEEPEVVDEDKEDDEEENKED) are enriched in acidic residues.

The protein belongs to the bacterial ribosomal protein bL25 family. CTC subfamily. As to quaternary structure, part of the 50S ribosomal subunit; part of the 5S rRNA/L5/L18/L25 subcomplex. Contacts the 5S rRNA. Binds to the 5S rRNA independently of L5 and L18.

Its function is as follows. This is one of the proteins that binds to the 5S RNA in the ribosome where it forms part of the central protuberance. The protein is Large ribosomal subunit protein bL25 of Staphylococcus epidermidis (strain ATCC 12228 / FDA PCI 1200).